The following is a 145-amino-acid chain: Neuromedin-S (145 aa).

An N-terminal signal peptide occupies residues 1–25 (MKYLAQFPSILAIYCFCLLQIPSSG). 3 consecutive propeptides follow at residues 26–64 (FPRP…IYKR), 65–100 (FLFH…ADRR), and 101–103 (MKT). An Asparagine amide modification is found at asparagine 136. Residues 139 to 145 (NLDFDTW) constitute a propeptide that is removed on maturation.

This sequence belongs to the NmU family.

The protein localises to the secreted. In terms of biological role, implicated in the regulation of circadian rhythms through autocrine and/or paracrine actions. This chain is Neuromedin-S (NMS), found in Bos taurus (Bovine).